The following is a 668-amino-acid chain: tRNA 5-methylaminomethyl-2-thiouridine biosynthesis bifunctional protein MnmC (668 aa).

The tract at residues 1–245 (MKHYAIQPAN…KREMLCGVME (245 aa)) is tRNA (mnm(5)s(2)U34)-methyltransferase. The FAD-dependent cmnm(5)s(2)U34 oxidoreductase stretch occupies residues 270 to 668 (IGGGIASALL…LLKGKAVKAG (399 aa)).

This sequence in the N-terminal section; belongs to the methyltransferase superfamily. tRNA (mnm(5)s(2)U34)-methyltransferase family. In the C-terminal section; belongs to the DAO family. FAD is required as a cofactor.

The protein localises to the cytoplasm. It carries out the reaction 5-aminomethyl-2-thiouridine(34) in tRNA + S-adenosyl-L-methionine = 5-methylaminomethyl-2-thiouridine(34) in tRNA + S-adenosyl-L-homocysteine + H(+). Catalyzes the last two steps in the biosynthesis of 5-methylaminomethyl-2-thiouridine (mnm(5)s(2)U) at the wobble position (U34) in tRNA. Catalyzes the FAD-dependent demodification of cmnm(5)s(2)U34 to nm(5)s(2)U34, followed by the transfer of a methyl group from S-adenosyl-L-methionine to nm(5)s(2)U34, to form mnm(5)s(2)U34. This Escherichia coli (strain SMS-3-5 / SECEC) protein is tRNA 5-methylaminomethyl-2-thiouridine biosynthesis bifunctional protein MnmC.